A 1057-amino-acid polypeptide reads, in one-letter code: Carbamoyl phosphate synthase large chain (1057 aa).

The segment at 1–401 is carboxyphosphate synthetic domain; the sequence is MPKNKDINTI…SLLKAIRSLE (401 aa). Positions 129, 169, 175, 176, 208, 210, 215, 241, 242, 243, 284, and 298 each coordinate ATP. The region spanning 133 to 327 is the ATP-grasp 1 domain; it reads RSLMNELDVP…IAKLAAKIAV (195 aa). Residues glutamine 284, glutamate 298, and asparagine 300 each contribute to the Mg(2+) site. Mn(2+) contacts are provided by glutamine 284, glutamate 298, and asparagine 300. Positions 402–546 are oligomerization domain; that stretch reads YGVHHLGLPN…YGTYERDNES (145 aa). The tract at residues 547–929 is carbamoyl phosphate synthetic domain; the sequence is VVTDKEKVIV…ALFKGLTASG (383 aa). Residues 671–861 enclose the ATP-grasp 2 domain; that stretch reads EALLNKIDVP…MAQLAMRAIL (191 aa). Positions 707, 746, 748, 752, 777, 778, 779, 780, 820, and 832 each coordinate ATP. Positions 820, 832, and 834 each coordinate Mg(2+). Mn(2+) contacts are provided by glutamine 820, glutamate 832, and asparagine 834. Residues 930–1057 enclose the MGS-like domain; sequence VEVKDHGTVL…ESMSFTMKQM (128 aa). Residues 930-1057 are allosteric domain; the sequence is VEVKDHGTVL…ESMSFTMKQM (128 aa).

This sequence belongs to the CarB family. In terms of assembly, composed of two chains; the small (or glutamine) chain promotes the hydrolysis of glutamine to ammonia, which is used by the large (or ammonia) chain to synthesize carbamoyl phosphate. Tetramer of heterodimers (alpha,beta)4. Requires Mg(2+) as cofactor. Mn(2+) is required as a cofactor.

The catalysed reaction is hydrogencarbonate + L-glutamine + 2 ATP + H2O = carbamoyl phosphate + L-glutamate + 2 ADP + phosphate + 2 H(+). The enzyme catalyses hydrogencarbonate + NH4(+) + 2 ATP = carbamoyl phosphate + 2 ADP + phosphate + 2 H(+). Its pathway is amino-acid biosynthesis; L-arginine biosynthesis; carbamoyl phosphate from bicarbonate: step 1/1. It participates in pyrimidine metabolism; UMP biosynthesis via de novo pathway; (S)-dihydroorotate from bicarbonate: step 1/3. Its function is as follows. Large subunit of the glutamine-dependent carbamoyl phosphate synthetase (CPSase). CPSase catalyzes the formation of carbamoyl phosphate from the ammonia moiety of glutamine, carbonate, and phosphate donated by ATP, constituting the first step of 2 biosynthetic pathways, one leading to arginine and/or urea and the other to pyrimidine nucleotides. The large subunit (synthetase) binds the substrates ammonia (free or transferred from glutamine from the small subunit), hydrogencarbonate and ATP and carries out an ATP-coupled ligase reaction, activating hydrogencarbonate by forming carboxy phosphate which reacts with ammonia to form carbamoyl phosphate. This is Carbamoyl phosphate synthase large chain from Staphylococcus carnosus (strain TM300).